A 106-amino-acid polypeptide reads, in one-letter code: Toxin-like structure LSTX-D3 (106 aa).

A signal peptide spans 1–20 (MMKVLVVVALLVTLISYSSS). The propeptide occupies 21–41 (EGIDDLEADELLSLMANEQTR). Cystine bridges form between C45-C60, C52-C69, C59-C85, and C71-C83.

It belongs to the neurotoxin 19 (CSTX) family. 02 (D7) subfamily. Expressed by the venom gland.

Its subcellular location is the secreted. The polypeptide is Toxin-like structure LSTX-D3 (Lycosa singoriensis (Wolf spider)).